Here is a 94-residue protein sequence, read N- to C-terminus: uncharacterized protein (94 aa).

This is an uncharacterized protein from Archaeoglobus fulgidus (strain ATCC 49558 / DSM 4304 / JCM 9628 / NBRC 100126 / VC-16).